Consider the following 365-residue polypeptide: Aspartate-semialdehyde dehydrogenase (365 aa).

8 residues coordinate NADP(+): T13, G14, S15, V16, S38, S41, L85, and D86. T13 carries the post-translational modification Phosphothreonine. Residue C156 is the Acyl-thioester intermediate of the active site. G188 provides a ligand contact to NADP(+). Residue H256 is the Proton acceptor of the active site. Phosphoserine occurs at positions 318 and 323. An NADP(+)-binding site is contributed by N343.

The protein belongs to the aspartate-semialdehyde dehydrogenase family. Homotetramer.

The protein localises to the cytoplasm. It localises to the cytosol. Its subcellular location is the nucleus. It carries out the reaction L-aspartate 4-semialdehyde + phosphate + NADP(+) = 4-phospho-L-aspartate + NADPH + H(+). It participates in amino-acid biosynthesis; L-methionine biosynthesis via de novo pathway; L-homoserine from L-aspartate: step 2/3. It functions in the pathway amino-acid biosynthesis; L-threonine biosynthesis; L-threonine from L-aspartate: step 2/5. Functionally, catalyzes the NADPH-dependent formation of L-aspartate 4-semialdehyde (L-ASA) by the reductive dephosphorylation of 4-phospho-L-aspartate. Mediates the second step in the biosynthesis of amino acids that derive from aspartate (the aspartate family of amino acids), including methioinine and threonine, the latter of which is a precursor to isoleucine. This is Aspartate-semialdehyde dehydrogenase (HOM2) from Saccharomyces cerevisiae (strain ATCC 204508 / S288c) (Baker's yeast).